A 131-amino-acid polypeptide reads, in one-letter code: Large ribosomal subunit protein bL17 (131 aa).

Belongs to the bacterial ribosomal protein bL17 family. Part of the 50S ribosomal subunit. Contacts protein L32.

The polypeptide is Large ribosomal subunit protein bL17 (Burkholderia mallei (strain NCTC 10229)).